Consider the following 101-residue polypeptide: Small ribosomal subunit protein uS10 (101 aa).

It belongs to the universal ribosomal protein uS10 family. As to quaternary structure, part of the 30S ribosomal subunit.

Involved in the binding of tRNA to the ribosomes. This chain is Small ribosomal subunit protein uS10, found in Bacteroides fragilis (strain ATCC 25285 / DSM 2151 / CCUG 4856 / JCM 11019 / LMG 10263 / NCTC 9343 / Onslow / VPI 2553 / EN-2).